The primary structure comprises 1257 residues: Endochitinase A (1257 aa).

Residues 1 to 21 form the signal peptide; sequence MVFKPLTIAAAIAGLTPFVSA. One can recognise a GH18 domain in the interval 28–339; that stretch reads SNVAVYYGQG…DVIKDILVAV (312 aa). Catalysis depends on Glu-175, which acts as the Proton donor. Disordered stretches follow at residues 364-429, 595-980, and 1141-1174; these read TPVA…STPV, TPAA…LAPI, and DALT…PTTT. Over residues 595–696 the composition is skewed to low complexity; it reads TPAASSSPAV…STPVRSTSSV (102 aa). Residues 700 to 715 are compositionally biased toward polar residues; that stretch reads KSSSAPVIPKPSSTVI. Positions 716-935 are enriched in low complexity; sequence ATFTSSSGSL…ASGSGAQDST (220 aa). An N-linked (GlcNAc...) asparagine glycan is attached at Asn-825. Polar residues predominate over residues 940 to 964; the sequence is HASTLSPSYSTPLASASGQTGSPTT. N-linked (GlcNAc...) asparagine glycosylation is present at Asn-973. The segment covering 1145–1154 has biased composition (polar residues); sequence ASPSGSQPAG. A compositionally biased stretch (low complexity) spans 1156 to 1174; the sequence is SSPGQSAPTAPASTAPTTT. Gly-1231 carries GPI-anchor amidated glycine lipidation. The propeptide at 1232–1257 is removed in mature form; it reads AASRVSRLQHGAGAVSAFALFLLAAI.

Belongs to the glycosyl hydrolase 18 family. Chitinase class III subfamily. In terms of processing, O-glycosylated.

It localises to the cell membrane. Its subcellular location is the secreted. The protein localises to the cell wall. It carries out the reaction Random endo-hydrolysis of N-acetyl-beta-D-glucosaminide (1-&gt;4)-beta-linkages in chitin and chitodextrins.. GPI-anchored chitinase involved in the degradation of chitin, a component of the cell walls of fungi and exoskeletal elements of some animals (including worms and arthropods). Required to reshape the cell wall at the sites where cell wall remodeling and/or cell wall maturation actively take place such as sites of conidia formation. The sequence is that of Endochitinase A (ctcA) from Aspergillus niger (strain ATCC MYA-4892 / CBS 513.88 / FGSC A1513).